Here is a 311-residue protein sequence, read N- to C-terminus: Methionyl-tRNA formyltransferase (311 aa).

Residue 110-113 (SLLP) coordinates (6S)-5,6,7,8-tetrahydrofolate.

Belongs to the Fmt family.

The enzyme catalyses L-methionyl-tRNA(fMet) + (6R)-10-formyltetrahydrofolate = N-formyl-L-methionyl-tRNA(fMet) + (6S)-5,6,7,8-tetrahydrofolate + H(+). Functionally, attaches a formyl group to the free amino group of methionyl-tRNA(fMet). The formyl group appears to play a dual role in the initiator identity of N-formylmethionyl-tRNA by promoting its recognition by IF2 and preventing the misappropriation of this tRNA by the elongation apparatus. The protein is Methionyl-tRNA formyltransferase of Streptococcus equi subsp. zooepidemicus (strain H70).